Reading from the N-terminus, the 445-residue chain is MSRKYFGTDGVRGEVGKFPITPEFVMKLGYAAGRVLVNHDQDSRPTVLIGKDTRISGYMLEAALQAGFTAAGVNVLLTGPLPTPGIAYLTRALRLEAGVVISASHNPFQDNGIKFFAEGGNKLDDALELEIEAMLDQPMATNPSLELGRARRIDGAAERYIEFCKSTFPNELSLKGLKLVVDCANGATYHIAPKVFHELGAELVEIGCEPNGYNINDKVGATYPKTLQMAVLEHQADFGIALDGDGDRLIMVDAAGRVYDGDQLIYVIAKARAARGELKGGVVGTVMTNMAMELALQKQGVPFGRAKVGDRYVLEMLHADGWQVGGEASGHILCLDKHSTGDGIISSLQVLASLKQLGLSLAEICADWRPFPQTLINVRHNGCDWKAASAAPLAEAEAALQGRGRVVLRPSGTEPVVRVMVEADDKALADTWAKAIAAAIEKVSA.

Ser104 serves as the catalytic Phosphoserine intermediate. Mg(2+)-binding residues include Ser104, Asp243, Asp245, and Asp247. Ser104 carries the post-translational modification Phosphoserine.

Belongs to the phosphohexose mutase family. Requires Mg(2+) as cofactor. In terms of processing, activated by phosphorylation.

The catalysed reaction is alpha-D-glucosamine 1-phosphate = D-glucosamine 6-phosphate. In terms of biological role, catalyzes the conversion of glucosamine-6-phosphate to glucosamine-1-phosphate. This Chromobacterium violaceum (strain ATCC 12472 / DSM 30191 / JCM 1249 / CCUG 213 / NBRC 12614 / NCIMB 9131 / NCTC 9757 / MK) protein is Phosphoglucosamine mutase.